A 599-amino-acid chain; its full sequence is Glycerophosphodiester phosphodiesterase domain-containing protein 5 (599 aa).

Residues 1 to 42 (MVKHQPLQYYEPQLCLSCLTGIYGCRWKRYQRSHDDTTKWER) are Cytoplasmic-facing. Disulfide bonds link C15-C18 and C25-C576. A helical membrane pass occupies residues 43–63 (LWFLILTSSFFLTLVWFYFWW). Residues 64–87 (EVHNDYNEINWFLYNRMGYWSDWS) lie on the Extracellular side of the membrane. A helical membrane pass occupies residues 88 to 108 (IPILVTTAAGFTYITVLLILA). Over 109-125 (LCHIAVGQQMNLHWLHK) the chain is Cytoplasmic. Residues 126–146 (IGLMTTLITTVVTMSSIAQLW) traverse the membrane as a helical segment. The Extracellular segment spans residues 147–160 (DDEWEMVFISLQAT). The chain crosses the membrane as a helical span at residues 161-181 (APFLHIGALAAVTALSWLIAG). The Cytoplasmic portion of the chain corresponds to 182-192 (QFARMEKATSQ). Residues 193-213 (MLMVTAYLAVVVALYLVPLTI) traverse the membrane as a helical segment. Residues 214–497 (SSPCIMEKKA…IWLMPPDEYR (284 aa)) are Extracellular-facing. The GP-PDE domain maps to 228 to 485 (PAIIGHRGAP…DSSHVLRKVP (258 aa)). N301, N336, N352, N374, and N448 each carry an N-linked (GlcNAc...) asparagine glycan. Residues 498 to 518 (LIWITSDLISFIIIVGVFIFQ) traverse the membrane as a helical segment. Topologically, residues 519–599 (NYHNDQWRLG…DHRDTRLRMN (81 aa)) are cytoplasmic.

The protein belongs to the glycerophosphoryl diester phosphodiesterase family. In terms of assembly, interacts with PRDX1; forms a mixed-disulfide with PRDX1, leading to disrupt intramolecular disulfide bond between Cys-25 and Cys-576. Post-translationally, intramolecular disulfide bond between Cys-25 and Cys-576 is reduced by PRDX1. In terms of tissue distribution, detected in mature motor neurons.

Its subcellular location is the endomembrane system. The protein localises to the cytoplasm. The protein resides in the perinuclear region. It localises to the cell projection. It is found in the growth cone. The enzyme catalyses a 1,2-diacyl-sn-glycero-3-phospho-(1D-myo-inositol-4,5-bisphosphate) + H2O = 1D-myo-inositol 1,4,5-trisphosphate + a 1,2-diacyl-sn-glycerol + H(+). It catalyses the reaction sn-glycerol 3-phosphocholine + H2O = sn-glycerol 3-phosphate + choline + H(+). With respect to regulation, activated by PRDX1 by reduction of an intramolecular disulfide bond. In terms of biological role, glycerophosphodiester phosphodiesterase that promotes cell cycle exit and drives spinal motor neuron differentiation. Mediates the cleavage of glycosylphosphatidylinositol (GPI) anchor of target proteins: removes the GPI-anchor of RECK, leading to release RECK from the plasma membrane. May contribute to the osmotic regulation of cellular glycerophosphocholine. The protein is Glycerophosphodiester phosphodiesterase domain-containing protein 5 (GDPD5) of Gallus gallus (Chicken).